Consider the following 149-residue polypeptide: Large ribosomal subunit protein uL15 (149 aa).

Residues 1 to 29 (MVSHLKKTRKLRGHVSHGHGRVGKHRKGG) are compositionally biased toward basic residues. Positions 1 to 38 (MVSHLKKTRKLRGHVSHGHGRVGKHRKGGCRGGRGKAG) are disordered.

This sequence belongs to the universal ribosomal protein uL15 family.

The polypeptide is Large ribosomal subunit protein uL15 (RPL27A) (Tetrahymena thermophila).